Consider the following 785-residue polypeptide: Endonuclease MutS2 (785 aa).

Position 335 to 342 (Gly-335 to Thr-342) interacts with ATP. In terms of domain architecture, Smr spans Leu-710–Lys-785.

This sequence belongs to the DNA mismatch repair MutS family. MutS2 subfamily. In terms of assembly, homodimer. Binds to stalled ribosomes, contacting rRNA.

Its function is as follows. Endonuclease that is involved in the suppression of homologous recombination and thus may have a key role in the control of bacterial genetic diversity. In terms of biological role, acts as a ribosome collision sensor, splitting the ribosome into its 2 subunits. Detects stalled/collided 70S ribosomes which it binds and splits by an ATP-hydrolysis driven conformational change. Acts upstream of the ribosome quality control system (RQC), a ribosome-associated complex that mediates the extraction of incompletely synthesized nascent chains from stalled ribosomes and their subsequent degradation. Probably generates substrates for RQC. This Listeria monocytogenes serovar 1/2a (strain ATCC BAA-679 / EGD-e) protein is Endonuclease MutS2.